The following is a 615-amino-acid chain: Isocitrate dehydrogenase kinase/phosphatase (615 aa).

ATP is bound by residues 325 to 331 (APGIKGM) and lysine 346. Aspartate 381 is an active-site residue.

This sequence belongs to the AceK family.

The protein localises to the cytoplasm. It catalyses the reaction L-seryl-[isocitrate dehydrogenase] + ATP = O-phospho-L-seryl-[isocitrate dehydrogenase] + ADP + H(+). Its function is as follows. Bifunctional enzyme which can phosphorylate or dephosphorylate isocitrate dehydrogenase (IDH) on a specific serine residue. This is a regulatory mechanism which enables bacteria to bypass the Krebs cycle via the glyoxylate shunt in response to the source of carbon. When bacteria are grown on glucose, IDH is fully active and unphosphorylated, but when grown on acetate or ethanol, the activity of IDH declines drastically concomitant with its phosphorylation. In Albidiferax ferrireducens (strain ATCC BAA-621 / DSM 15236 / T118) (Rhodoferax ferrireducens), this protein is Isocitrate dehydrogenase kinase/phosphatase.